Here is a 124-residue protein sequence, read N- to C-terminus: Small polypeptide ROTUNDIFOLIA LIKE 3 (124 aa).

The tract at residues 1–23 (MEDERWKLSSSKGRSKSGRSCSS) is disordered. N-linked (GlcNAc...) asparagine glycosylation is found at Asn-35 and Asn-38. Residues 59–75 (AWSAAGAGGGGASSSSS) traverse the membrane as a helical segment. Positions 60-95 (WSAAGAGGGGASSSSSSQHQHQQQQQQSNNSQRLSK) are disordered. Positions 71 to 91 (SSSSSSQHQHQQQQQQSNNSQ) are enriched in low complexity. Asn-88 carries N-linked (GlcNAc...) asparagine glycosylation. The tract at residues 92-124 (RLSKKCVEAVKEHRARFYIVRRCVSMLVCWRDY) is required for DVL/RTFL small polypeptide activity.

Belongs to the DVL/RTFL small polypeptides family.

Its subcellular location is the cell membrane. Small polypeptide acting as a regulatory molecule which coordinates cellular responses required for differentiation, growth and development, probably by restricting polar cell proliferation in lateral organs (e.g. leaves and petioles). The chain is Small polypeptide ROTUNDIFOLIA LIKE 3 from Oryza sativa subsp. japonica (Rice).